A 197-amino-acid polypeptide reads, in one-letter code: MDHHSKAKELLQQRDELDGKIKELMLVLETNNSTMDSPLLDAEGYPLNTIDVYAVRHARHDLICLRNDRAALTEKIVVEMENENKEVSGQTATSEEKPVHRTSNEPFVKISSVVELSPADIGGFRKDDLIIQYGNLHHGNFNDMQEVAQITKQSEDKIIRVTVIRENRPVRLEICPKKWSGPGLLGCNIVPISGANV.

One can recognise a PDZ domain in the interval 75–166; it reads KIVVEMENEN…KIIRVTVIRE (92 aa).

The protein belongs to the proteasome subunit p27 family.

Its function is as follows. Acts as a chaperone during the assembly of the 26S proteasome, specifically of the base subcomplex of the 19S regulatory complex (RC). The chain is Probable 26S proteasome non-ATPase regulatory subunit 9 (psmd-9) from Caenorhabditis elegans.